The sequence spans 913 residues: DNA polymerase I (913 aa).

The 305-residue stretch at 1–305 (MSQAPLVLVD…AGENGEAETP (305 aa)) folds into the 5'-3' exonuclease domain. The 196-residue stretch at 306–501 (IQAEVDYDVV…LHQALWQKLE (196 aa)) folds into the 3'-5' exonuclease domain. The polymerase stretch occupies residues 505–913 (SLARVLTDIE…GVGSNWDEAH (409 aa)).

This sequence belongs to the DNA polymerase type-A family. As to quaternary structure, single-chain monomer with multiple functions.

It carries out the reaction DNA(n) + a 2'-deoxyribonucleoside 5'-triphosphate = DNA(n+1) + diphosphate. In terms of biological role, in addition to polymerase activity, this DNA polymerase exhibits 3'-5' and 5'-3' exonuclease activity. The protein is DNA polymerase I (polA) of Pseudomonas aeruginosa (strain ATCC 15692 / DSM 22644 / CIP 104116 / JCM 14847 / LMG 12228 / 1C / PRS 101 / PAO1).